A 903-amino-acid chain; its full sequence is DNA mismatch repair protein MutS (903 aa).

ATP is bound at residue 655–662 (GPNMAGKS).

The protein belongs to the DNA mismatch repair MutS family.

This protein is involved in the repair of mismatches in DNA. It is possible that it carries out the mismatch recognition step. This protein has a weak ATPase activity. The chain is DNA mismatch repair protein MutS from Caulobacter vibrioides (strain ATCC 19089 / CIP 103742 / CB 15) (Caulobacter crescentus).